Consider the following 283-residue polypeptide: Glutamate racemase (283 aa).

Substrate is bound by residues 28–29 (DS) and 60–61 (YG). The active-site Proton donor/acceptor is C92. A substrate-binding site is contributed by 93–94 (NT). C204 serves as the catalytic Proton donor/acceptor. 205 to 206 (TH) is a binding site for substrate.

It belongs to the aspartate/glutamate racemases family.

It catalyses the reaction L-glutamate = D-glutamate. It participates in cell wall biogenesis; peptidoglycan biosynthesis. Its function is as follows. Provides the (R)-glutamate required for cell wall biosynthesis. This Salmonella choleraesuis (strain SC-B67) protein is Glutamate racemase.